The following is a 147-amino-acid chain: uncharacterized protein (147 aa).

An N-acetyltransferase domain is found at 7 to 147 (LEINYKTDEL…GHDVLVWAPK (141 aa)).

This is an uncharacterized protein from Staphylococcus haemolyticus (strain JCSC1435).